The following is a 509-amino-acid chain: Pituitary homeobox homolog Ptx1 (509 aa).

The span at 70–98 (NGAGSAGSAESATTTSTALSSGSTGSSTV) shows a compositional bias: low complexity. Disordered stretches follow at residues 70-125 (NGAG…SSVS), 148-171 (QDLVGGYSQHPHHTVVPPHTPKHE), and 204-273 (LNNF…HFTS). A compositionally biased stretch (polar residues) spans 227–242 (RSVNETTIKTENISSS). Residues 243-258 (GHDEPMTTSGEEPKND) are compositionally biased toward basic and acidic residues. A compositionally biased stretch (basic residues) spans 259 to 269 (KKNKRQRRQRT). Positions 262-322 (KRQRRQRTHF…KNRRAKWRKR (61 aa)) form a DNA-binding region, homeobox. The OAR signature appears at 460–473 (SSIATLRLKAKQHA). A Nuclear localization signal motif is present at residues 464 to 470 (TLRLKAK).

It belongs to the paired homeobox family. Bicoid subfamily.

It localises to the nucleus. Appears to control physiological cell functions rather than pattern formation during embryogenesis. This is Pituitary homeobox homolog Ptx1 (Ptx1) from Drosophila melanogaster (Fruit fly).